Reading from the N-terminus, the 63-residue chain is Large ribosomal subunit protein bL28 (63 aa).

It belongs to the bacterial ribosomal protein bL28 family.

The protein is Large ribosomal subunit protein bL28 of Clostridium perfringens (strain SM101 / Type A).